A 474-amino-acid polypeptide reads, in one-letter code: Dihydrolipoyl dehydrogenase (474 aa).

FAD-binding positions include 36–45 (ERYNTLGGVC), K54, and G117. C45 and C50 are joined by a disulfide. Residues 182–186 (GGGII) and E205 each bind NAD(+). Position 220 is an N6-acetyllysine (K220). NAD(+) is bound by residues V238 and 270–273 (AIGR). The FAD site is built by D313 and A321. H445 acts as the Proton acceptor in catalysis.

This sequence belongs to the class-I pyridine nucleotide-disulfide oxidoreductase family. In terms of assembly, homodimer. FAD serves as cofactor.

It localises to the cytoplasm. It catalyses the reaction N(6)-[(R)-dihydrolipoyl]-L-lysyl-[protein] + NAD(+) = N(6)-[(R)-lipoyl]-L-lysyl-[protein] + NADH + H(+). Its function is as follows. Lipoamide dehydrogenase is a component of the glycine cleavage system as well as of the alpha-ketoacid dehydrogenase complexes. This is Dihydrolipoyl dehydrogenase (lpdA) from Shigella flexneri.